The following is an 814-amino-acid chain: Glycogen phosphorylase (814 aa).

K662 bears the N6-(pyridoxal phosphate)lysine mark.

Belongs to the glycogen phosphorylase family. The cofactor is pyridoxal 5'-phosphate.

It catalyses the reaction [(1-&gt;4)-alpha-D-glucosyl](n) + phosphate = [(1-&gt;4)-alpha-D-glucosyl](n-1) + alpha-D-glucose 1-phosphate. Phosphorylase is an important allosteric enzyme in carbohydrate metabolism. Enzymes from different sources differ in their regulatory mechanisms and in their natural substrates. However, all known phosphorylases share catalytic and structural properties. This is Glycogen phosphorylase (glgP) from Chlamydia trachomatis serovar D (strain ATCC VR-885 / DSM 19411 / UW-3/Cx).